A 273-amino-acid chain; its full sequence is Large ribosomal subunit protein uL2c (273 aa).

The tract at residues M223–K273 is disordered.

It belongs to the universal ribosomal protein uL2 family. In terms of assembly, part of the 50S ribosomal subunit.

It is found in the plastid. The protein localises to the chloroplast. This is Large ribosomal subunit protein uL2c (rpl2) from Calycanthus floridus var. glaucus (Eastern sweetshrub).